Here is a 179-residue protein sequence, read N- to C-terminus: ATP synthase subunit delta (179 aa).

The protein belongs to the ATPase delta chain family. In terms of assembly, F-type ATPases have 2 components, F(1) - the catalytic core - and F(0) - the membrane proton channel. F(1) has five subunits: alpha(3), beta(3), gamma(1), delta(1), epsilon(1). F(0) has three main subunits: a(1), b(2) and c(10-14). The alpha and beta chains form an alternating ring which encloses part of the gamma chain. F(1) is attached to F(0) by a central stalk formed by the gamma and epsilon chains, while a peripheral stalk is formed by the delta and b chains.

It localises to the cell inner membrane. In terms of biological role, f(1)F(0) ATP synthase produces ATP from ADP in the presence of a proton or sodium gradient. F-type ATPases consist of two structural domains, F(1) containing the extramembraneous catalytic core and F(0) containing the membrane proton channel, linked together by a central stalk and a peripheral stalk. During catalysis, ATP synthesis in the catalytic domain of F(1) is coupled via a rotary mechanism of the central stalk subunits to proton translocation. Functionally, this protein is part of the stalk that links CF(0) to CF(1). It either transmits conformational changes from CF(0) to CF(1) or is implicated in proton conduction. The protein is ATP synthase subunit delta of Cupriavidus pinatubonensis (strain JMP 134 / LMG 1197) (Cupriavidus necator (strain JMP 134)).